A 212-amino-acid polypeptide reads, in one-letter code: MKQLFRQWYDLSEIKKELTTRNWFPATSGNISIKVSHDPLTFLITASGKDKTKTTPDDFLLVNHQGIPVLETELRPSAETILHTHIYNNTNAGCVLHVHTTDNNVITNLYSDAVTLQNQEIIKALDIWEEGATINIPIIENDAHIPTLGEKFRKHIQGDSGAVLIRNHGITVWGRDSFDAKKRLEAYEFLFQFHIKLLSIQGGVSNGANSYS.

Residues histidine 97 and histidine 99 each contribute to the Zn(2+) site.

This sequence belongs to the aldolase class II family. MtnB subfamily. In terms of assembly, homotetramer. Requires Zn(2+) as cofactor.

The catalysed reaction is 5-(methylsulfanyl)-D-ribulose 1-phosphate = 5-methylsulfanyl-2,3-dioxopentyl phosphate + H2O. It functions in the pathway amino-acid biosynthesis; L-methionine biosynthesis via salvage pathway; L-methionine from S-methyl-5-thio-alpha-D-ribose 1-phosphate: step 2/6. Functionally, catalyzes the dehydration of methylthioribulose-1-phosphate (MTRu-1-P) into 2,3-diketo-5-methylthiopentyl-1-phosphate (DK-MTP-1-P). This chain is Methylthioribulose-1-phosphate dehydratase, found in Bacillus mycoides (strain KBAB4) (Bacillus weihenstephanensis).